Reading from the N-terminus, the 489-residue chain is UDP-N-acetylmuramate--L-alanine ligase (489 aa).

128–134 (GTHGKTT) contributes to the ATP binding site.

The protein belongs to the MurCDEF family.

It localises to the cytoplasm. The catalysed reaction is UDP-N-acetyl-alpha-D-muramate + L-alanine + ATP = UDP-N-acetyl-alpha-D-muramoyl-L-alanine + ADP + phosphate + H(+). Its pathway is cell wall biogenesis; peptidoglycan biosynthesis. Cell wall formation. The protein is UDP-N-acetylmuramate--L-alanine ligase of Shewanella halifaxensis (strain HAW-EB4).